The sequence spans 646 residues: MRPLVCVLWMFLFALLSSHTESVAVMSVDLGSEWVKVAIVKPGVPMEIVLNKESRRKTPAAIALKENERLFGENALGMAVKNPKVTFRYFQDLLGKRLDNPQVQAFEARFPEYHLVKDERRETVLFKLSEDLTYSPEELLGMVLNYSRSLAEDFAEQPVKDVVITVPAFFNQAERRAVLQAAQLSGLKVLQLINDNTAVALNYGVFRRKDINATAQNVMFYDMGTRSTICTIVTYQTIKTKDSGTQPQLQIRGVGFDRTLGGLEIDLRLRDHLAKLFNEQKKSKKDVRENQRAMNKLLKEANRVKTILSANNDHMAQIEGLMDDIDFKAKVTRQELEDLCADLFNRVSAPVQQALASAEMKMEEIDQVILVGGATRVPKVQEFLLKVVGKEELSKNINADEAAAMGAVYQAAALSKAFKVKPFIVRDAAIFPIQVEFTREVEEENHSKSLKHNKRILFQRLAPYPQRKVITFNRYTDDFAFSINYGDLSYLGPEDLKVFGSLNLTTVKLNGVGESFQKRSDYESKGIKAHFNMDESGLLTLDRVEAVFETVADEKPELESTLTKLGNTISSLFGGGSSVSETKENVTDSVQEEDEVPTEPTKEEEQESADPADKQQDKENNKEKGTSATNEKEEGKKEEEKAEPQE.

The signal sequence occupies residues M1–S22. The disordered stretch occupies residues L572–E646. Acidic residues predominate over residues V590–D610. Positions P611 to E646 are enriched in basic and acidic residues.

The protein belongs to the heat shock protein 70 family.

Its subcellular location is the endoplasmic reticulum lumen. Its function is as follows. Has a pivotal role in cytoprotective cellular mechanisms triggered by oxygen deprivation. May play a role as a molecular chaperone and participate in protein folding. The polypeptide is Hypoxia up-regulated protein 1 (hyou1) (Xenopus laevis (African clawed frog)).